A 475-amino-acid polypeptide reads, in one-letter code: 3-isopropylmalate dehydratase large subunit (475 aa).

The [4Fe-4S] cluster site is built by Cys349, Cys409, and Cys412.

The protein belongs to the aconitase/IPM isomerase family. LeuC type 1 subfamily. As to quaternary structure, heterodimer of LeuC and LeuD. The cofactor is [4Fe-4S] cluster.

The catalysed reaction is (2R,3S)-3-isopropylmalate = (2S)-2-isopropylmalate. It functions in the pathway amino-acid biosynthesis; L-leucine biosynthesis; L-leucine from 3-methyl-2-oxobutanoate: step 2/4. Catalyzes the isomerization between 2-isopropylmalate and 3-isopropylmalate, via the formation of 2-isopropylmaleate. The chain is 3-isopropylmalate dehydratase large subunit from Cereibacter sphaeroides (strain KD131 / KCTC 12085) (Rhodobacter sphaeroides).